A 259-amino-acid polypeptide reads, in one-letter code: Dickkopf-related protein 2 (259 aa).

The signal sequence occupies residues 1–33; the sequence is MAALMRVKDSSRCLLLLAAVLMVESSQLGSSRA. The tract at residues 42–70 is disordered; the sequence is LGGETPAQSANRSAGMNQGLAFGGSKKGK. The span at 47-57 shows a compositional bias: polar residues; that stretch reads PAQSANRSAGM. Asn52 carries an N-linked (GlcNAc...) asparagine glycan. The DKK-type Cys-1 stretch occupies residues 78-127; it reads CSSDKECEVGRYCHSPHQGSSACMLCRRKKKRCHRDGMCCPGTRCNNGIC. Intrachain disulfides connect Cys183/Cys195, Cys189/Cys204, Cys194/Cys231, Cys214/Cys239, and Cys233/Cys256. The tract at residues 183 to 256 is DKK-type Cys-2; sequence CLRSSDCIDG…YSSKARLHVC (74 aa).

Belongs to the dickkopf family. In terms of assembly, interacts with LRP5 and LRP6. Post-translationally, may be proteolytically processed by a furin-like protease.

It localises to the secreted. Antagonizes canonical Wnt signaling by inhibiting LRP5/6 interaction with Wnt and by forming a ternary complex with the transmembrane protein KREMEN that promotes internalization of LRP5/6. DKKs play an important role in vertebrate development, where they locally inhibit Wnt regulated processes such as antero-posterior axial patterning, limb development, somitogenesis and eye formation. In the adult, Dkks are implicated in bone formation and bone disease, cancer and Alzheimer disease. In Mus musculus (Mouse), this protein is Dickkopf-related protein 2.